A 96-amino-acid polypeptide reads, in one-letter code: DNA-directed RNA polymerase subunit Rpo11 (96 aa).

Belongs to the archaeal Rpo11/eukaryotic RPB11/RPC19 RNA polymerase subunit family. Part of the RNA polymerase complex.

It is found in the cytoplasm. It carries out the reaction RNA(n) + a ribonucleoside 5'-triphosphate = RNA(n+1) + diphosphate. Its function is as follows. DNA-dependent RNA polymerase (RNAP) catalyzes the transcription of DNA into RNA using the four ribonucleoside triphosphates as substrates. This is DNA-directed RNA polymerase subunit Rpo11 from Methanococcus maripaludis (strain C5 / ATCC BAA-1333).